The sequence spans 1123 residues: Probable serine/threonine-protein kinase nek3 (1123 aa).

The 261-residue stretch at 4–264 (YEEIKTIGKG…VNDILELPFI (261 aa)) folds into the Protein kinase domain. ATP contacts are provided by residues 10–18 (IGKGSFGRA) and Lys33. Residue Asp130 is the Proton acceptor of the active site. 2 stretches are compositionally biased toward low complexity: residues 283 to 307 (NNDS…ISSS) and 327 to 415 (NNNN…TSLK). Disordered stretches follow at residues 283–310 (NNDS…STEV), 325–415 (NINN…TSLK), 440–802 (SKTP…TNSQ), 866–887 (SAST…TNTM), 908–937 (SVKL…SITD), and 990–1020 (SLNN…NQNN). Residues 440–459 (SKTPISGTKNPTTSKITPSI) are compositionally biased toward polar residues. Composition is skewed to low complexity over residues 478-529 (SKPT…SSSV), 557-576 (SNLS…SNSQ), 588-617 (SPTS…SLKS), and 642-653 (NGNSNVNSTVLN). A compositionally biased stretch (polar residues) spans 654 to 665 (RSVSSLSIQHKP). 3 stretches are compositionally biased toward low complexity: residues 666 to 696 (TNSG…TSTT), 712 to 738 (STPT…TPST), and 752 to 802 (SSNG…TNSQ). A compositionally biased stretch (low complexity) spans 908-935 (SVKLSSKSSSPIKTSSSSSSSSSSSSSI).

This sequence belongs to the protein kinase superfamily. NEK Ser/Thr protein kinase family. NIMA subfamily.

The catalysed reaction is L-seryl-[protein] + ATP = O-phospho-L-seryl-[protein] + ADP + H(+). It carries out the reaction L-threonyl-[protein] + ATP = O-phospho-L-threonyl-[protein] + ADP + H(+). The chain is Probable serine/threonine-protein kinase nek3 (nek3) from Dictyostelium discoideum (Social amoeba).